Consider the following 151-residue polypeptide: Large ribosomal subunit protein uL15 (151 aa).

The tract at residues 1–57 (MTLRLDSLKANKGARRRKLRKGRGIAAGQGASCGFGMRGQKSRSGRPTRPGFEGGQM) is disordered. Over residues 12–23 (KGARRRKLRKGR) the composition is skewed to basic residues. Residues 25 to 37 (IAAGQGASCGFGM) show a composition bias toward gly residues.

Belongs to the universal ribosomal protein uL15 family. In terms of assembly, part of the 50S ribosomal subunit.

Functionally, binds to the 23S rRNA. This Synechococcus sp. (strain CC9902) protein is Large ribosomal subunit protein uL15.